Here is a 77-residue protein sequence, read N- to C-terminus: uncharacterized protein (77 aa).

Transmembrane regions (helical) follow at residues V22–G42 and L44–G64.

It localises to the cell membrane. This is an uncharacterized protein from Methanocaldococcus jannaschii (strain ATCC 43067 / DSM 2661 / JAL-1 / JCM 10045 / NBRC 100440) (Methanococcus jannaschii).